A 1640-amino-acid chain; its full sequence is Phospholipase D C (1640 aa).

Residues 122–132 (SHRSNQSFNHS) show a composition bias toward polar residues. Disordered stretches follow at residues 122–247 (SHRS…KRLS), 264–283 (HNQN…HTTT), 439–499 (EKQQ…YKYN), and 521–541 (DDEY…PSQE). Residues 133-193 (NSTTPLNTTN…YSSDNSYLHN (61 aa)) are compositionally biased toward low complexity. Positions 197–231 (DIYEDEDDEDDEDDDDDEDEDDEGKEFEQDDEDES) are enriched in acidic residues. A compositionally biased stretch (polar residues) spans 232–247 (TISSMSLKNSQAKRLS). Composition is skewed to low complexity over residues 264–273 (HNQNHQNHQN) and 467–499 (TTTT…YKYN). Residues 521–534 (DDEYYYGEYDDEDD) are compositionally biased toward acidic residues. One can recognise a PLD phosphodiesterase 1 domain in the interval 1009–1036 (LYWSHHQKVVVVDQRIAFIGGLDLCFGR). Active-site residues include His1014, Lys1016, and Asp1021. 2 stretches are compositionally biased toward low complexity: residues 1149 to 1274 (INNN…NNLN) and 1282 to 1296 (HNNS…QQQQ). Positions 1149–1315 (INNNNNNANN…YQPPLPPQQR (167 aa)) are disordered. Positions 1297–1306 (QHHHHHHHHY) are enriched in basic residues. The PLD phosphodiesterase 2 domain occupies 1460-1487 (EQIYVHSKVLIVDDKIAIIGSANINDRS). Active-site residues include His1465, Lys1467, and Asp1472.

It belongs to the phospholipase D family.

The enzyme catalyses a 1,2-diacyl-sn-glycero-3-phosphocholine + H2O = a 1,2-diacyl-sn-glycero-3-phosphate + choline + H(+). Inhibited by butan-1-ol. Functionally, plays a role in cell growth. Hydrolyzes membrane phospholipids, such as PtdCho (phosphatidylcholine), producing the free headgroup and PtdOH (phosphatidic acid; signaling molecule on its own). Involved in the inhibition of actin-based motility and endocytosis. Its inhibition causes complete collapse of F-actin organization. In Dictyostelium discoideum (Social amoeba), this protein is Phospholipase D C (pldC).